The chain runs to 1167 residues: DNA-directed RNA polymerase subunit beta (1167 aa).

A disordered region spans residues 1 to 27; that stretch reads MAVSPANQATAATTSAESRSEATGIPG. Positions 9–23 are enriched in low complexity; it reads ATAATTSAESRSEAT.

It belongs to the RNA polymerase beta chain family. As to quaternary structure, the RNAP catalytic core consists of 2 alpha, 1 beta, 1 beta' and 1 omega subunit. When a sigma factor is associated with the core the holoenzyme is formed, which can initiate transcription.

It catalyses the reaction RNA(n) + a ribonucleoside 5'-triphosphate = RNA(n+1) + diphosphate. DNA-dependent RNA polymerase catalyzes the transcription of DNA into RNA using the four ribonucleoside triphosphates as substrates. This chain is DNA-directed RNA polymerase subunit beta, found in Amycolatopsis mediterranei (strain S699) (Nocardia mediterranei).